We begin with the raw amino-acid sequence, 1046 residues long: SWI/SNF-related matrix-associated actin-dependent regulator of chromatin subfamily A member 1 (1046 aa).

The tract at residues 27–61 (EQPGPSTFKEEGAAAAATEGTTATEKGEKKEKITS) is disordered. Low complexity predominate over residues 39 to 50 (AAAAATEGTTAT). Residues Ser120 and Ser123 each carry the phosphoserine modification. The Helicase ATP-binding domain occupies 199-364 (ISLYENGVNG…WALLNFLLPD (166 aa)). Residue 212-219 (DEMGLGKT) participates in ATP binding. Residues 315 to 318 (DEAH) carry the DEAH box motif. The Helicase C-terminal domain maps to 494-645 (ALDKLLARIK…SIVIQQGRLI (152 aa)). Glycyl lysine isopeptide (Lys-Gly) (interchain with G-Cter in SUMO2) cross-links involve residues Lys654, Lys720, and Lys742. The segment at 819–840 (AQREEQKKIDGAEPLTPQETEE) is disordered. The segment covering 820–829 (QREEQKKIDG) has biased composition (basic and acidic residues). Residues 847-899 (QGFTNWTKRDFNQFIKANEKYGRDDIDNIAREVEGKSPEEVMEYSAVFWERCN) form the SANT 1 domain. Tyr946 is subject to Phosphotyrosine. Residues 950 to 1014 (KGKNYTEEED…QRRCNTLISL (65 aa)) form the SANT 2 domain. Positions 1003–1037 (EFQRRCNTLISLIEKENMEIEERERAEKKKRATKT) form a coiled coil. The interval 1025-1046 (RERAEKKKRATKTPMVKFSAFS) is disordered.

This sequence belongs to the SNF2/RAD54 helicase family. ISWI subfamily. In terms of assembly, may form homodimers. Component of the ACF-1 ISWI chromatin remodeling complex at least composed of SMARCA1 and BAZ1A, which regulates the spacing of histone octamers on the DNA template to facilitate access to DNA. Within the complex interacts with BAZ1A; the interaction is direct. Component of the WICH-1 ISWI chromatin remodeling complex at least composed of SMARCA1 and BAZ1B/WSTF. Within the complex interacts with BAZ1B/WSTF. Component of the NoRC-1 ISWI chromatin remodeling complex at least composed of SMARCA1 and BAZ2A/TIP5. Within the complex interacts with BAZ2A/TIP5. Component of the BRF-1 ISWI chromatin remodeling complex at least composed of SMARCA1 and BAZ2B. Within the complex interacts with BAZ2B. Component of the NURF-1 ISWI chromatin remodeling complex (also called the nucleosome-remodeling factor (NURF) complex) at least composed of SMARCA1, BPTF, RBBP4 and RBBP7. Within the complex interacts with BPTF. Within the complex interacts with RBBP4 and RBBP7. Component of the CERF-1 ISWI chromatin remodeling complex (also called the CECR2-containing-remodeling factor (CERF) complex) at least composed of CECR2 and SMARCA1. LUZP1 is detected as part of the CERF-1 complex in embryonic stem cells where it is involved in complex stabilization but is not detected in the complex in the testis. Component of the RSF-1 ISWI chromatin remodeling complex at least composed of SMARCA1 and RSF1. Within the complex interacts with RSF1. Interacts with PRLR. Interacts with ERCC6. As to expression, predominantly expressed in cortex, cerebellum, ovaries, testes, uterus and placenta.

It localises to the nucleus. The enzyme catalyses ATP + H2O = ADP + phosphate + H(+). Functionally, ATPase that possesses intrinsic ATP-dependent chromatin-remodeling activity. ATPase activity is substrate-dependent, and is increased when nucleosomes are the substrate, but is also catalytically active when DNA alone is the substrate. Catalytic subunit of ISWI chromatin-remodeling complexes, which form ordered nucleosome arrays on chromatin and facilitate access to DNA during DNA-templated processes such as DNA replication, transcription, and repair. Within the ISWI chromatin-remodeling complexes, slides edge- and center-positioned histone octamers away from their original location on the DNA template. Catalytic activity and histone octamer sliding propensity is regulated and determined by components of the ISWI chromatin-remodeling complexes. The BAZ1A-, BAZ1B-, BAZ2A- and BAZ2B-containing ISWI chromatin-remodeling complexes regulate the spacing of nucleosomes along the chromatin and have the ability to slide mononucleosomes to the center of a DNA template. The CECR2- and RSF1-containing ISWI chromatin-remodeling complexes do not have the ability to slide mononucleosomes to the center of a DNA template. Within the NURF-1 and CERF-1 ISWI chromatin remodeling complexes, nucleosomes are the preferred substrate for its ATPase activity. Within the NURF-1 ISWI chromatin-remodeling complex, binds to the promoters of En1 and En2 to positively regulate their expression and promote brain development. May promote neurite outgrowth. May be involved in the development of luteal cells. Facilitates nucleosome assembly during DNA replication, ensuring replication fork progression and genomic stability by preventing replication stress and nascent DNA gaps. In Mus musculus (Mouse), this protein is SWI/SNF-related matrix-associated actin-dependent regulator of chromatin subfamily A member 1 (Smarca1).